The chain runs to 554 residues: Formate--tetrahydrofolate ligase (554 aa).

Residue 64 to 71 (TPAGEGKS) participates in ATP binding.

Belongs to the formate--tetrahydrofolate ligase family.

It catalyses the reaction (6S)-5,6,7,8-tetrahydrofolate + formate + ATP = (6R)-10-formyltetrahydrofolate + ADP + phosphate. The protein operates within one-carbon metabolism; tetrahydrofolate interconversion. The polypeptide is Formate--tetrahydrofolate ligase (Leuconostoc citreum (strain KM20)).